Consider the following 205-residue polypeptide: ATP phosphoribosyltransferase (205 aa).

Belongs to the ATP phosphoribosyltransferase family. Short subfamily. In terms of assembly, heteromultimer composed of HisG and HisZ subunits.

The protein localises to the cytoplasm. It carries out the reaction 1-(5-phospho-beta-D-ribosyl)-ATP + diphosphate = 5-phospho-alpha-D-ribose 1-diphosphate + ATP. It participates in amino-acid biosynthesis; L-histidine biosynthesis; L-histidine from 5-phospho-alpha-D-ribose 1-diphosphate: step 1/9. In terms of biological role, catalyzes the condensation of ATP and 5-phosphoribose 1-diphosphate to form N'-(5'-phosphoribosyl)-ATP (PR-ATP). Has a crucial role in the pathway because the rate of histidine biosynthesis seems to be controlled primarily by regulation of HisG enzymatic activity. The polypeptide is ATP phosphoribosyltransferase (Leptospira borgpetersenii serovar Hardjo-bovis (strain JB197)).